We begin with the raw amino-acid sequence, 350 residues long: Arabinogalactan endo-beta-1,4-galactanase A (350 aa).

A signal peptide spans 1–17 (MILSSLLPLSLVTLTSA). N-linked (GlcNAc...) asparagine glycosylation is present at asparagine 129. The active-site Proton donor is the glutamate 153. Glutamate 263 serves as the catalytic Nucleophile.

Belongs to the glycosyl hydrolase 53 family.

The protein resides in the secreted. The enzyme catalyses The enzyme specifically hydrolyzes (1-&gt;4)-beta-D-galactosidic linkages in type I arabinogalactans.. Its function is as follows. Endogalactanase involved in the degradation of plant cell wall polysaccharides, and more particularly of hairy regions of pectin. The sequence is that of Arabinogalactan endo-beta-1,4-galactanase A (galA) from Emericella nidulans (strain FGSC A4 / ATCC 38163 / CBS 112.46 / NRRL 194 / M139) (Aspergillus nidulans).